A 243-amino-acid chain; its full sequence is Ribosomal RNA small subunit methyltransferase J (243 aa).

Residues 112–113 (ER) and aspartate 164 each bind S-adenosyl-L-methionine.

Belongs to the methyltransferase superfamily. RsmJ family.

The protein localises to the cytoplasm. The enzyme catalyses guanosine(1516) in 16S rRNA + S-adenosyl-L-methionine = N(2)-methylguanosine(1516) in 16S rRNA + S-adenosyl-L-homocysteine + H(+). Specifically methylates the guanosine in position 1516 of 16S rRNA. This Legionella pneumophila (strain Paris) protein is Ribosomal RNA small subunit methyltransferase J.